Reading from the N-terminus, the 755-residue chain is Glucosylglycerol-phosphate synthase (755 aa).

The protein belongs to the glycosyltransferase 20 family.

It catalyses the reaction ADP-alpha-D-glucose + sn-glycerol 3-phosphate = 2-O-(alpha-D-glucopyranosyl)-sn-glycerol 3-phosphate + ADP + H(+). It participates in glycan metabolism; glucosylglycerol biosynthesis. Functionally, involved in salt tolerance by producing GG-phosphate from ADP-glucose and glycerol-3-phosphate (G3P), an intermediate in the synthesis of the osmolyte glucosylglycerol (GG). In Pseudomonas anguilliseptica, this protein is Glucosylglycerol-phosphate synthase (ggpS).